The primary structure comprises 717 residues: Polyribonucleotide nucleotidyltransferase (717 aa).

Positions 487 and 493 each coordinate Mg(2+). The KH domain maps to 554–613; sequence PKIITMAINPDKIRDVIGPSGKQINKIIEETGVKIDIEQDGTVFISSINQEMNEKAKKII. Residues 623 to 691 form the S1 motif domain; sequence GEIYLGKVKR…KQGRVNLSRK (69 aa).

The protein belongs to the polyribonucleotide nucleotidyltransferase family. The cofactor is Mg(2+).

It localises to the cytoplasm. It catalyses the reaction RNA(n+1) + phosphate = RNA(n) + a ribonucleoside 5'-diphosphate. In terms of biological role, involved in mRNA degradation. Catalyzes the phosphorolysis of single-stranded polyribonucleotides processively in the 3'- to 5'-direction. This Bacillus mycoides (strain KBAB4) (Bacillus weihenstephanensis) protein is Polyribonucleotide nucleotidyltransferase.